Reading from the N-terminus, the 200-residue chain is Recombination protein RecR (200 aa).

Residues C59–C74 form a C4-type zinc finger. Residues S82–P177 enclose the Toprim domain.

The protein belongs to the RecR family.

Its function is as follows. May play a role in DNA repair. It seems to be involved in an RecBC-independent recombinational process of DNA repair. It may act with RecF and RecO. This Bifidobacterium longum subsp. infantis (strain ATCC 15697 / DSM 20088 / JCM 1222 / NCTC 11817 / S12) protein is Recombination protein RecR.